Here is a 315-residue protein sequence, read N- to C-terminus: Small ribosomal subunit biogenesis GTPase RsgA (315 aa).

Residues 79–243 (LSKESHILGA…LIDTPGIKGF (165 aa)) enclose the CP-type G domain. GTP is bound by residues 128–131 (NKID) and 182–190 (GHSGVGKSS). Zn(2+) contacts are provided by Cys267, Cys272, His274, and Cys280.

Belongs to the TRAFAC class YlqF/YawG GTPase family. RsgA subfamily. Monomer. Associates with 30S ribosomal subunit, binds 16S rRNA. Zn(2+) serves as cofactor.

It is found in the cytoplasm. One of several proteins that assist in the late maturation steps of the functional core of the 30S ribosomal subunit. Helps release RbfA from mature subunits. May play a role in the assembly of ribosomal proteins into the subunit. Circularly permuted GTPase that catalyzes slow GTP hydrolysis, GTPase activity is stimulated by the 30S ribosomal subunit. The protein is Small ribosomal subunit biogenesis GTPase RsgA of Porphyromonas gingivalis (strain ATCC BAA-308 / W83).